A 300-amino-acid chain; its full sequence is Ecto-ADP-ribosyltransferase 4 (300 aa).

The signal sequence occupies residues methionine 1 to alanine 23. Over glycine 24–cysteine 269 the chain is Extracellular. 2 disulfide bridges follow: cysteine 48/cysteine 259 and cysteine 161/cysteine 210. The TR mART core domain occupies lysine 70–serine 255. Residues asparagine 110 and asparagine 157 are each glycosylated (N-linked (GlcNAc...) asparagine). Glutamine 185 is a binding site for NAD(+). N-linked (GlcNAc...) asparagine glycosylation is present at asparagine 201. Serine 219 provides a ligand contact to NAD(+). Asparagine 253 carries an N-linked (GlcNAc...) asparagine glycan. Alanine 264 carries the GPI-anchor amidated alanine lipid modification. Residues cysteine 265–phenylalanine 300 constitute a propeptide, removed in mature form. Residues alanine 270–isoleucine 286 traverse the membrane as a helical segment. The Cytoplasmic segment spans residues serine 287–phenylalanine 300.

It belongs to the Arg-specific ADP-ribosyltransferase family.

The protein resides in the membrane. Its subcellular location is the cell membrane. The catalysed reaction is L-arginyl-[protein] + NAD(+) = N(omega)-(ADP-D-ribosyl)-L-arginyl-[protein] + nicotinamide + H(+). The protein is Ecto-ADP-ribosyltransferase 4 (Art4) of Mus musculus (Mouse).